Consider the following 561-residue polypeptide: Arginine--tRNA ligase (561 aa).

Positions 108–118 (PNVAKEMHVGH) match the 'HIGH' region motif.

This sequence belongs to the class-I aminoacyl-tRNA synthetase family. As to quaternary structure, monomer.

It localises to the cytoplasm. It carries out the reaction tRNA(Arg) + L-arginine + ATP = L-arginyl-tRNA(Arg) + AMP + diphosphate. The polypeptide is Arginine--tRNA ligase (Haemophilus ducreyi (strain 35000HP / ATCC 700724)).